The sequence spans 157 residues: Endoribonuclease YbeY (157 aa).

Residues H118, H122, and H128 each coordinate Zn(2+).

The protein belongs to the endoribonuclease YbeY family. It depends on Zn(2+) as a cofactor.

Its subcellular location is the cytoplasm. Functionally, single strand-specific metallo-endoribonuclease involved in late-stage 70S ribosome quality control and in maturation of the 3' terminus of the 16S rRNA. The polypeptide is Endoribonuclease YbeY (Bordetella parapertussis (strain 12822 / ATCC BAA-587 / NCTC 13253)).